The sequence spans 312 residues: Olfactory receptor-like protein COR5 (312 aa).

Residues 1–26 (MALGNCTTPTTFILSGLTDNPRLQMP) are Extracellular-facing. N5 carries an N-linked (GlcNAc...) asparagine glycan. A helical transmembrane segment spans residues 27 to 49 (LFMVFLAIYTITLLANLGLIALI). The Cytoplasmic portion of the chain corresponds to 50–57 (SVDFHLQT). The chain crosses the membrane as a helical span at residues 58-79 (PMYIFLQNLSFTDAAYSTVITP). Over 80–100 (KMLATFLEERRTISYVGCILQ) the chain is Extracellular. C97 and C179 are oxidised to a cystine. The helical transmembrane segment at 101–120 (YFSFVLLTSSECLLLAVMAY) threads the bilayer. Over 121 to 139 (DRYVAICKPLLYPAIMTKA) the chain is Cytoplasmic. Residues 140 to 164 (VCWRLVEGLYSLAFLNSLVHTSGLL) traverse the membrane as a helical segment. At 165–205 (KLSFCSSNVVNHFFCDNSPLFQISSSSTTLNELLVFIFGSW) the chain is on the extracellular side. Residues 206–226 (FAMSSIITTPISYVFIILTVV) traverse the membrane as a helical segment. Over 227 to 239 (RIRSKDGKYKAFS) the chain is Cytoplasmic. The helical transmembrane segment at 240–260 (TCTSHLMAVSLFHGTVIFMYL) threads the bilayer. Residues 261 to 271 (RPVKLFSLDTD) are Extracellular-facing. Residues 272-292 (KIASLFYTVVIPMLNPLIYSW) form a helical membrane-spanning segment. The Cytoplasmic portion of the chain corresponds to 293–312 (RNKEVKDALRRVIATNVWIH).

It belongs to the G-protein coupled receptor 1 family.

The protein localises to the cell membrane. Functionally, odorant receptor. In Gallus gallus (Chicken), this protein is Olfactory receptor-like protein COR5 (COR5).